We begin with the raw amino-acid sequence, 430 residues long: Delta-aminolevulinic acid dehydratase 1, chloroplastic (430 aa).

A chloroplast-targeting transit peptide spans 1 to 52 (MATTPIFNASCSFPSTRGIDCKSYIGLRSNVSKVSVASSRIATSQRRNLVVR). Residues 82-91 (EAPPVPPKPA) are compositionally biased toward pro residues. The disordered stretch occupies residues 82-101 (EAPPVPPKPAAPVGTPIIKP). K298 acts as the Schiff-base intermediate with substrate in catalysis. R308 and K320 together coordinate 5-aminolevulinate. Mg(2+) is bound at residue E336. K351 (schiff-base intermediate with substrate) is an active-site residue. Positions 377 and 416 each coordinate 5-aminolevulinate.

Belongs to the ALAD family. Homooctamer. The cofactor is Mg(2+). In terms of tissue distribution, highly expressed in cotyledons during dark-to-light transition.

It is found in the plastid. The protein localises to the chloroplast. The catalysed reaction is 2 5-aminolevulinate = porphobilinogen + 2 H2O + H(+). It functions in the pathway porphyrin-containing compound metabolism; protoporphyrin-IX biosynthesis; coproporphyrinogen-III from 5-aminolevulinate: step 1/4. Its pathway is porphyrin-containing compound metabolism; chlorophyll biosynthesis. Catalyzes an early step in the biosynthesis of tetrapyrroles. Binds two molecules of 5-aminolevulinate per subunit, each at a distinct site, and catalyzes their condensation to form porphobilinogen. This chain is Delta-aminolevulinic acid dehydratase 1, chloroplastic (HEMB1), found in Arabidopsis thaliana (Mouse-ear cress).